Here is a 322-residue protein sequence, read N- to C-terminus: Eukaryotic translation initiation factor 3 subunit I (322 aa).

WD repeat units lie at residues 4 to 43 (GHER…RLGT), 46 to 85 (GHQG…VIAS), 141 to 180 (MTES…KVVD), 184 to 223 (DHTG…CLKT), and 281 to 322 (GHFG…NIFE).

Belongs to the eIF-3 subunit I family. As to quaternary structure, component of the eukaryotic translation initiation factor 3 (eIF-3) complex. The eIF-3 complex interacts with pix.

The protein localises to the cytoplasm. Functionally, component of the eukaryotic translation initiation factor 3 (eIF-3) complex, which is involved in protein synthesis of a specialized repertoire of mRNAs and, together with other initiation factors, stimulates binding of mRNA and methionyl-tRNAi to the 40S ribosome. The eIF-3 complex specifically targets and initiates translation of a subset of mRNAs involved in cell proliferation. The polypeptide is Eukaryotic translation initiation factor 3 subunit I (Drosophila willistoni (Fruit fly)).